The primary structure comprises 329 residues: Biotin synthase (329 aa).

The region spanning 38 to 262 (NTIQVSTLLS…IMPHSYIRLS (225 aa)) is the Radical SAM core domain. The [4Fe-4S] cluster site is built by Cys-53, Cys-57, and Cys-60. Residues Cys-97, Cys-128, Cys-188, and Arg-260 each coordinate [2Fe-2S] cluster.

It belongs to the radical SAM superfamily. Biotin synthase family. As to quaternary structure, homodimer. [4Fe-4S] cluster serves as cofactor. It depends on [2Fe-2S] cluster as a cofactor.

It catalyses the reaction (4R,5S)-dethiobiotin + (sulfur carrier)-SH + 2 reduced [2Fe-2S]-[ferredoxin] + 2 S-adenosyl-L-methionine = (sulfur carrier)-H + biotin + 2 5'-deoxyadenosine + 2 L-methionine + 2 oxidized [2Fe-2S]-[ferredoxin]. It participates in cofactor biosynthesis; biotin biosynthesis; biotin from 7,8-diaminononanoate: step 2/2. Functionally, catalyzes the conversion of dethiobiotin (DTB) to biotin by the insertion of a sulfur atom into dethiobiotin via a radical-based mechanism. The chain is Biotin synthase from Acinetobacter calcoaceticus.